A 1136-amino-acid chain; its full sequence is Probable LRR receptor-like serine/threonine-protein kinase At4g36180 (1136 aa).

The N-terminal stretch at methionine 1–alanine 22 is a signal peptide. Residues aspartate 23 to lysine 751 lie on the Extracellular side of the membrane. LRR repeat units follow at residues methionine 93–cysteine 115, arginine 117–leucine 139, serine 141–serine 162, serine 163–threonine 186, glutamine 187–glutamine 210, serine 211–cysteine 233, serine 235–alanine 256, and lysine 259–cysteine 280. N-linked (GlcNAc...) asparagine glycans are attached at residues asparagine 105 and asparagine 138. Residues asparagine 184, asparagine 192, and asparagine 232 are each glycosylated (N-linked (GlcNAc...) asparagine). Residues asparagine 269 and asparagine 281 are each glycosylated (N-linked (GlcNAc...) asparagine). LRR repeat units lie at residues serine 283–alanine 304, glycine 309–asparagine 330, serine 333–leucine 355, arginine 357–cysteine 379, serine 381–methionine 403, alanine 405–asparagine 426, glutamine 429–threonine 452, serine 453–serine 479, phenylalanine 480–phenylalanine 500, lysine 501–proline 524, asparagine 525–serine 546, serine 549–leucine 571, leucine 573–cysteine 595, alanine 597–proline 620, arginine 621–serine 643, serine 645–glycine 666, asparagine 669–isoleucine 691, and asparagine 694–arginine 716. A glycan (N-linked (GlcNAc...) asparagine) is linked at asparagine 365. Asparagine 441, asparagine 474, asparagine 477, asparagine 482, asparagine 511, asparagine 535, asparagine 554, and asparagine 594 each carry an N-linked (GlcNAc...) asparagine glycan. An N-linked (GlcNAc...) asparagine glycan is attached at asparagine 631. Asparagine 669, asparagine 679, asparagine 699, and asparagine 719 each carry an N-linked (GlcNAc...) asparagine glycan. Residues methionine 752–phenylalanine 772 traverse the membrane as a helical segment. Over tyrosine 773–alanine 1136 the chain is Cytoplasmic. Positions glutamine 786–glutamate 819 are disordered. Over residues arginine 799–threonine 815 the composition is skewed to low complexity. Phosphothreonine occurs at positions 830 and 838. The 283-residue stretch at phenylalanine 841–valine 1123 folds into the Protein kinase domain. Residues tyrosine 915 and tyrosine 1010 each carry the phosphotyrosine modification.

The protein belongs to the protein kinase superfamily. Ser/Thr protein kinase family.

It is found in the cell membrane. The catalysed reaction is L-seryl-[protein] + ATP = O-phospho-L-seryl-[protein] + ADP + H(+). It carries out the reaction L-threonyl-[protein] + ATP = O-phospho-L-threonyl-[protein] + ADP + H(+). The polypeptide is Probable LRR receptor-like serine/threonine-protein kinase At4g36180 (Arabidopsis thaliana (Mouse-ear cress)).